The primary structure comprises 128 residues: Gastrotropin (128 aa).

Ala-2 bears the N-acetylalanine mark.

Belongs to the calycin superfamily. Fatty-acid binding protein (FABP) family. As to expression, expressed in ileum.

The protein localises to the cytoplasm. The protein resides in the membrane. Its function is as follows. Binds to bile acids and is involved in enterohepatic bile acid metabolism. Required for efficient apical to basolateral transport of conjugated bile acids in ileal enterocytes. Stimulates gastric acid and pepsinogen secretion. This chain is Gastrotropin (FABP6), found in Oryctolagus cuniculus (Rabbit).